The primary structure comprises 285 residues: Ribonuclease H1 (285 aa).

The disordered stretch occupies residues 72 to 126 (RSSSSPDGSKGQESAHEQKSQAKTSKRPREPLGEGEELPEPGPKHTRQDTEPAAV). Residues 135-281 (MGESVIVYTD…ADRLAREGAK (147 aa)) form the RNase H type-1 domain. Mg(2+) contacts are provided by Asp-144, Glu-185, Asp-209, and Asp-273.

It belongs to the RNase H family. In terms of assembly, monomer. Mg(2+) is required as a cofactor.

The protein localises to the cytoplasm. The catalysed reaction is Endonucleolytic cleavage to 5'-phosphomonoester.. In the presence of magnesium, manganese is inhibitory. In terms of biological role, endonuclease that specifically degrades the RNA of RNA-DNA hybrids. Plays a role in RNA polymerase II (RNAp II) transcription termination by degrading R-loop RNA-DNA hybrid formation at G-rich pause sites located downstream of the poly(A) site and behind the elongating RNAp II. The sequence is that of Ribonuclease H1 (Rnaseh1) from Mus musculus (Mouse).